Consider the following 664-residue polypeptide: MDNKLEKMKKLVEELNQYAYEYYVLDNPSISDKEYDLKYDELVILEKETQVTLPYSPTQRVGDKILGEFSKYTHKGRLWSLDKAQNMEQLIEWHNRNLKVIEQYNSMSEDKLPELRYIVTKKFDGLTVNCTYDENGILIKSATRGTGIIGEDITAQIKTIKTVPLKIKNNHVIEVHGEAIMTKTAFEEYNKAAQVPLKNLRNGAAGALRNLDIKETARRNLSAFFYDVGYNEGPEFKSYREMMNFIRNMGLPQDKYIKECTNMEEVEKEIEYIESIREELDYDIDGAVIVVDDIKTREILGYTIKFPKWAIAYKFEAKEITTKLLDVEWNVGRSGRVTPTALLEPVELGGVTVKRATLNNMDDIKRKNVKLGAKVLVRRSNDVIPEIMGVVEESLEESKEIQAPDRCPYCNSHLVQNGVHYYCENTLSCKPQMVKSIVHFASREAMNIAGFSGKTAEQLFERLDIKSISDLYKIRKEELLTLDKFGDKKSQNLIDAIENSKNCDLASFIYALGIPNVGKKTANDLVMKFKTLESIKNTTIEQLVEVPDVGEIVAKSIYDFFEDEKIISNIEELLNLGVKPYYEEERIDENPFMGKTIVVTGSLNNYSRGEIKDKLQSLGAKVSSSVSKNTDYVLVGEKPGSKYEKAIELGVKVINEEEFSNKIK.

Residues 32-36 (DKEYD) and 80-81 (SL) each bind NAD(+). Lysine 122 acts as the N6-AMP-lysine intermediate in catalysis. Positions 144, 178, and 314 each coordinate NAD(+). Zn(2+)-binding residues include cysteine 407, cysteine 410, cysteine 423, and cysteine 429. In terms of domain architecture, BRCT spans 587-664 (IDENPFMGKT…NEEEFSNKIK (78 aa)).

The protein belongs to the NAD-dependent DNA ligase family. LigA subfamily. Requires Mg(2+) as cofactor. Mn(2+) is required as a cofactor.

It catalyses the reaction NAD(+) + (deoxyribonucleotide)n-3'-hydroxyl + 5'-phospho-(deoxyribonucleotide)m = (deoxyribonucleotide)n+m + AMP + beta-nicotinamide D-nucleotide.. DNA ligase that catalyzes the formation of phosphodiester linkages between 5'-phosphoryl and 3'-hydroxyl groups in double-stranded DNA using NAD as a coenzyme and as the energy source for the reaction. It is essential for DNA replication and repair of damaged DNA. The sequence is that of DNA ligase from Clostridium botulinum (strain 657 / Type Ba4).